The following is a 711-amino-acid chain: BCLAF1 and THRAP3 family member 3 (711 aa).

A compositionally biased stretch (basic residues) spans 1-15 (MARSRSRSPRWKHRS). Disordered regions lie at residues 1–42 (MARS…YRKD) and 48–67 (AWRM…PSRG). Residues S15 and S17 each carry the phosphoserine modification. The span at 48-57 (AWRMDSEKHG) shows a compositional bias: basic and acidic residues. Phosphoserine occurs at positions 78, 80, and 187. Disordered regions lie at residues 94-350 (KPHR…KDSI) and 371-404 (EKIK…PSPI). Basic and acidic residues-rich tracts occupy residues 163–197 (FRFE…DFET), 204–213 (RYPEDRDFRK), 220–242 (RPKD…KPEH), 296–311 (SDGR…DRKY), 318–349 (LNRE…KKDS), and 371–383 (EKIK…RKES). K400 participates in a covalent cross-link: Glycyl lysine isopeptide (Lys-Gly) (interchain with G-Cter in SUMO2). 2 positions are modified to phosphoserine: S402 and S578.

Belongs to the BCLAF1/THRAP3 family.

It is found in the mitochondrion. The sequence is that of BCLAF1 and THRAP3 family member 3 from Homo sapiens (Human).